A 523-amino-acid chain; its full sequence is Tyrosine ammonia-lyase (523 aa).

The Proton donor/acceptor role is filled by Tyr60. His89 is a binding site for substrate. Residues 149-151 constitute a cross-link (5-imidazolinone (Ala-Gly)); it reads ASG. Ser150 carries the 2,3-didehydroalanine (Ser) modification. Substrate-binding positions include Arg303 and 432-436; that span reads NAANQ.

Belongs to the PAL/histidase family. As to quaternary structure, homotetramer. Post-translationally, contains an active site 4-methylidene-imidazol-5-one (MIO), which is formed autocatalytically by cyclization and dehydration of residues Ala-Ser-Gly.

It carries out the reaction L-tyrosine = (E)-4-coumarate + NH4(+). Catalyzes the non-oxidative deamination of L-tyrosine. Has very low phenylalanine ammonia-lyase activity (in vitro). This chain is Tyrosine ammonia-lyase (hutH), found in Cereibacter sphaeroides (strain ATCC 17023 / DSM 158 / JCM 6121 / CCUG 31486 / LMG 2827 / NBRC 12203 / NCIMB 8253 / ATH 2.4.1.) (Rhodobacter sphaeroides).